A 169-amino-acid chain; its full sequence is Procalin (169 aa).

An N-terminal signal peptide occupies residues 1–18; that stretch reads MKTFIVITFIGILSYAYA. Intrachain disulfides connect Cys21/Cys125, Cys54/Cys168, and Cys83/Cys97.

Belongs to the calycin superfamily. Triabin family. As to expression, expressed in salivary glands.

It is found in the secreted. The polypeptide is Procalin (Hospesneotomae protracta (Western bloodsucking conenose)).